Consider the following 333-residue polypeptide: tRNA dimethylallyltransferase (333 aa).

Residue 16–23 coordinates ATP; the sequence is GPTASGKT. 18–23 is a binding site for substrate; it reads TASGKT. Interaction with substrate tRNA stretches follow at residues 41 to 44, 165 to 169, and 253 to 258; these read DSAL, QRISR, and RCVGYR.

This sequence belongs to the IPP transferase family. As to quaternary structure, monomer. It depends on Mg(2+) as a cofactor.

The enzyme catalyses adenosine(37) in tRNA + dimethylallyl diphosphate = N(6)-dimethylallyladenosine(37) in tRNA + diphosphate. Catalyzes the transfer of a dimethylallyl group onto the adenine at position 37 in tRNAs that read codons beginning with uridine, leading to the formation of N6-(dimethylallyl)adenosine (i(6)A). The polypeptide is tRNA dimethylallyltransferase (Polaromonas sp. (strain JS666 / ATCC BAA-500)).